Consider the following 483-residue polypeptide: Isocitrate dehydrogenase [NADP] (483 aa).

Thr-74 lines the NADP(+) pocket. D-threo-isocitrate-binding residues include Ser-83, Asn-85, Arg-89, Arg-99, and Arg-121. Asp-232 is a Mg(2+) binding site. NADP(+) is bound by residues 264 to 270 (HGSAPDI) and Asn-277.

The protein belongs to the isocitrate and isopropylmalate dehydrogenases family. Homodimer. Mg(2+) is required as a cofactor. Mn(2+) serves as cofactor.

The catalysed reaction is D-threo-isocitrate + NADP(+) = 2-oxoglutarate + CO2 + NADPH. Its function is as follows. Catalyzes the oxidative decarboxylation of isocitrate to 2-oxoglutarate and carbon dioxide with the concomitant reduction of NADP(+). This Rickettsia bellii (strain RML369-C) protein is Isocitrate dehydrogenase [NADP] (icd).